The chain runs to 255 residues: MGTLTLKQIQEEAQKLSIQEAIEYLSTLHSTGFKVDKLLEKYYRLKNKHDREMERLQKMLSFERQAISEGFNYIAGVDEAGRGPLAGPVVAAAVVLPNGLTIEGINDSKKLSESQREKLFSEIKEKALSYGISVIDEKYIDEVNILNATKRAMTEALSQLEPTADCILLDAVRLDNISTKQVPIIKGDSLSLSIAAASILAKVTRDRLLTEYDAKYPQYGFAAHKGYGTPQHISAIKKFGLCPIHRLSFVKNFVE.

The RNase H type-2 domain maps to 72–255; the sequence is NYIAGVDEAG…RLSFVKNFVE (184 aa). 3 residues coordinate a divalent metal cation: Asp-78, Glu-79, and Asp-170.

It belongs to the RNase HII family. The cofactor is Mn(2+). Requires Mg(2+) as cofactor.

The protein localises to the cytoplasm. The enzyme catalyses Endonucleolytic cleavage to 5'-phosphomonoester.. In terms of biological role, endonuclease that specifically degrades the RNA of RNA-DNA hybrids. The polypeptide is Ribonuclease HII (Ruminiclostridium cellulolyticum (strain ATCC 35319 / DSM 5812 / JCM 6584 / H10) (Clostridium cellulolyticum)).